The following is an 87-amino-acid chain: Neurotoxin LmNaTx64.1 (87 aa).

The first 18 residues, 1-18 (MKILFLIILTAFFIGVHC), serve as a signal peptide directing secretion. An LCN-type CS-alpha/beta domain is found at 19–85 (KHGYPIIRAG…TWSRATNKCK (67 aa)). 4 disulfide bridges follow: Cys33–Cys84, Cys37–Cys58, Cys44–Cys65, and Cys48–Cys67. A Cysteine amide modification is found at Cys84.

Belongs to the long (4 C-C) scorpion toxin superfamily. Sodium channel inhibitor family. Beta subfamily. As to expression, expressed by the venom gland.

Its subcellular location is the secreted. Its function is as follows. Binds voltage-independently at site-4 of sodium channels (Nav) and shift the voltage of activation toward more negative potentials thereby affecting sodium channel activation and promoting spontaneous and repetitive firing. The chain is Neurotoxin LmNaTx64.1 from Lychas mucronatus (Chinese swimming scorpion).